The chain runs to 174 residues: uncharacterized protein (174 aa).

The protein belongs to the IIV-6 196R family.

This is an uncharacterized protein from Acheta domesticus (House cricket).